Here is a 101-residue protein sequence, read N- to C-terminus: Small ribosomal subunit protein uS14 (101 aa).

This sequence belongs to the universal ribosomal protein uS14 family. As to quaternary structure, part of the 30S ribosomal subunit. Contacts proteins S3 and S10.

Functionally, binds 16S rRNA, required for the assembly of 30S particles and may also be responsible for determining the conformation of the 16S rRNA at the A site. The sequence is that of Small ribosomal subunit protein uS14 from Alteromonas mediterranea (strain DSM 17117 / CIP 110805 / LMG 28347 / Deep ecotype).